The chain runs to 328 residues: D-cysteine desulfhydrase (328 aa).

Lysine 51 bears the N6-(pyridoxal phosphate)lysine mark.

It belongs to the ACC deaminase/D-cysteine desulfhydrase family. In terms of assembly, homodimer. Requires pyridoxal 5'-phosphate as cofactor.

The enzyme catalyses D-cysteine + H2O = hydrogen sulfide + pyruvate + NH4(+) + H(+). In terms of biological role, catalyzes the alpha,beta-elimination reaction of D-cysteine and of several D-cysteine derivatives. It could be a defense mechanism against D-cysteine. The polypeptide is D-cysteine desulfhydrase (Escherichia coli O157:H7).